Consider the following 681-residue polypeptide: Sodium/glucose cotransporter 4 (681 aa).

The Extracellular segment spans residues 1 to 36; that stretch reads MSKELAAMGPGASGDGVRTETAPHIALDSRVGLHAY. A helical transmembrane segment spans residues 37–57; that stretch reads DISVVVIYFVFVIAVGIWSSI. The Cytoplasmic portion of the chain corresponds to 58–75; it reads RASRGTIGGYFLAGRSMS. Residues 76 to 98 form a helical membrane-spanning segment; that stretch reads WWPIGASLMSSNVGSGLFIGLAG. The Extracellular segment spans residues 99-114; sequence TGAAGGLAVGGFEWNA. A helical membrane pass occupies residues 115 to 135; the sequence is TWLLLALGWVFVPVYIAAGVV. The Cytoplasmic segment spans residues 136 to 157; that stretch reads TMPQYLKKRFGGQRIQVYMSVL. The chain crosses the membrane as a helical span at residues 158–178; the sequence is SLILYIFTKISTDIFSGALFI. The Extracellular segment spans residues 179-190; it reads QMALGWNLYLST. Residues 191–211 traverse the membrane as a helical segment; sequence GILLVVTAVYTIAGGLMAVIY. Topologically, residues 212–217 are cytoplasmic; sequence TDALQT. A helical transmembrane segment spans residues 218 to 238; sequence VIMVGGALVLMFLGFQDVGWY. The Extracellular portion of the chain corresponds to 239–275; that stretch reads PGLEQRYRQAIPNVTVPNTTCHLPRPDAFHILRDPVS. An N-linked (GlcNAc...) asparagine glycan is attached at N251. A helical membrane pass occupies residues 276–296; it reads GDIPWPGLIFGLTVLATWCWC. The Cytoplasmic portion of the chain corresponds to 297–317; the sequence is TDQVIVQRSLSAKSLSHAKGG. Residues 318–338 traverse the membrane as a helical segment; the sequence is SVLGGYLKILPMFFIVMPGMI. The Extracellular segment spans residues 339 to 383; it reads SRALFPDEVGCVDPDVCQRICGARVGCSNIAYPKLVMALMPVGLR. A helical membrane pass occupies residues 384-406; sequence GLMIAVIMAALMSSLTSIFNSSS. The Cytoplasmic segment spans residues 407-427; sequence TLFTIDVWQRFRRKSTEQELM. The helical transmembrane segment at 428-448 threads the bilayer; sequence VVGRVFVVFLVVISILWIPII. Residues 449 to 459 lie on the Extracellular side of the membrane; it reads QSSNSGQLFDY. Residues 460-480 traverse the membrane as a helical segment; the sequence is IQAVTSYLAPPITALFLLAIF. Residues 481–487 are Cytoplasmic-facing; the sequence is CKRVTEP. Residues 488 to 508 form a helical membrane-spanning segment; that stretch reads GAFWGLVFGLGVGLLRMILEF. At 509 to 530 the chain is on the extracellular side; the sequence is SYPAPACGEVDRRPAVLKDFHY. Residues 531 to 551 traverse the membrane as a helical segment; sequence LYFAILLCGLTAIVIVIVSLC. Residues 552–660 are Cytoplasmic-facing; the sequence is TTPIPEEQLT…SIEEEPLWRH (109 aa). Positions 579-591 are enriched in basic and acidic residues; it reads AHESTPEISERPA. Positions 579–614 are disordered; sequence AHESTPEISERPAGECPAGGGAAENSSLGQEQPEAP. Phosphoserine is present on residues S604 and S605. A helical membrane pass occupies residues 661–681; the sequence is VCNINAVLLLAINIFLWGYFA.

This sequence belongs to the sodium:solute symporter (SSF) (TC 2.A.21) family. Expressed in the small intestine, kidney and liver.

Its subcellular location is the cell membrane. It carries out the reaction D-mannose(out) + n Na(+)(out) = D-mannose(in) + n Na(+)(in). Its function is as follows. Electrogenic Na(+)-coupled sugar symporter that may play a primary role in D-mannose and possibly D-fructose and D-glucose transport at the plasma membrane. Transporter activity is driven by a transmembrane Na(+) electrochemical gradient set by the Na(+)/K(+) pump. Exclusively recognizes sugar substrates having a pyranose ring with an axial hydroxyl group on carbon 2. The chain is Sodium/glucose cotransporter 4 from Homo sapiens (Human).